The following is a 352-amino-acid chain: UPF0324 membrane protein blr3189 (352 aa).

The next 11 helical transmembrane spans lie at 21-43 (IAAL…LLER), 53-71 (YVEA…RSFW), 88-110 (LLEV…ASGI), 114-136 (ASIA…LLGL), 143-165 (LIAC…IIGA), 175-197 (SFTA…LLQL), 204-226 (ILAG…AGLV), 236-253 (LMRV…SLVA), 265-284 (VGFF…LATL), 294-316 (VVGP…LGLG), and 329-351 (VTAA…VHWF).

Belongs to the UPF0324 family.

Its subcellular location is the cell membrane. The polypeptide is UPF0324 membrane protein blr3189 (Bradyrhizobium diazoefficiens (strain JCM 10833 / BCRC 13528 / IAM 13628 / NBRC 14792 / USDA 110)).